A 353-amino-acid chain; its full sequence is Fe(3+) ions import ATP-binding protein FbpC (353 aa).

Positions 9–239 constitute an ABC transporter domain; the sequence is VTFQNVRKSF…PASSFIADFM (231 aa). An ATP-binding site is contributed by 41-48; that stretch reads GPSGCGKT.

This sequence belongs to the ABC transporter superfamily. Fe(3+) ion importer (TC 3.A.1.10) family. In terms of assembly, the complex is composed of two ATP-binding proteins (FbpC), two transmembrane proteins (FbpB) and a solute-binding protein (FbpA).

It localises to the cell inner membrane. It carries out the reaction Fe(3+)(out) + ATP + H2O = Fe(3+)(in) + ADP + phosphate + H(+). Part of the ABC transporter complex FbpABC involved in Fe(3+) ions import. Responsible for energy coupling to the transport system. The polypeptide is Fe(3+) ions import ATP-binding protein FbpC (Rhizobium etli (strain ATCC 51251 / DSM 11541 / JCM 21823 / NBRC 15573 / CFN 42)).